The sequence spans 89 residues: Peroxidase (89 aa).

Histidine 52 contacts heme. Ca(2+) contacts are provided by threonine 53 and aspartate 68.

It depends on heme b as a cofactor. Ca(2+) serves as cofactor.

It localises to the secreted. It carries out the reaction 2 a phenolic donor + H2O2 = 2 a phenolic radical donor + 2 H2O. In terms of biological role, removal of H(2)O(2), oxidation of toxic reductants, biosynthesis and degradation of lignin, suberization, auxin catabolism, response to environmental stresses such as wounding, pathogen attack and oxidative stress. These functions might be dependent on each isozyme/isoform in each plant tissue. Active against p-coumaryl alcohol, coniferyl alcohol and coniferyl aldehyde. This Ginkgo biloba (Ginkgo) protein is Peroxidase.